The sequence spans 113 residues: Ig kappa chain V-II region 7S34.1 (113 aa).

Residues 1 to 23 form a framework-1 region; the sequence is DIVMTQTAPSALVTPGESVSISC. A disulfide bridge connects residues Cys-23 and Cys-93. The interval 24 to 39 is complementarity-determining-1; that stretch reads RSSKSLLHSNGNTYLY. The framework-2 stretch occupies residues 40-54; sequence WFLQRPGQCPQLLIY. Positions 55–61 are complementarity-determining-2; it reads RMSNLAS. Residues 62 to 93 are framework-3; sequence GVPDRFSGSGSGTAFTLRISRVEAEDVGVYYC. Residues 94–102 form a complementarity-determining-3 region; sequence MQQREYPYT. The tract at residues 103-112 is framework-4; that stretch reads FGGGTKLEIK.

This Mus musculus (Mouse) protein is Ig kappa chain V-II region 7S34.1.